Reading from the N-terminus, the 338-residue chain is Large ribosomal subunit protein uL10 (338 aa).

The interval 303–338 (VEVSAAPAAEEEKEEEKKEEEKKEEDTGAAGLALLF) is disordered. Basic and acidic residues predominate over residues 317–328 (EEKKEEEKKEED).

Belongs to the universal ribosomal protein uL10 family. In terms of assembly, part of the 50S ribosomal subunit. Forms part of the ribosomal stalk which helps the ribosome interact with GTP-bound translation factors. Forms a heptameric L10(L12)2(L12)2(L12)2 complex, where L10 forms an elongated spine to which the L12 dimers bind in a sequential fashion.

Its function is as follows. Forms part of the ribosomal stalk, playing a central role in the interaction of the ribosome with GTP-bound translation factors. The chain is Large ribosomal subunit protein uL10 from Methanocaldococcus jannaschii (strain ATCC 43067 / DSM 2661 / JAL-1 / JCM 10045 / NBRC 100440) (Methanococcus jannaschii).